Here is a 173-residue protein sequence, read N- to C-terminus: RTX-III toxin-activating lysine-acyltransferase ApxIIC (173 aa).

Residues H29 and D98 contribute to the active site.

This sequence belongs to the RTX toxin acyltransferase family. In terms of assembly, homodimer.

It localises to the cytoplasm. It catalyses the reaction a fatty acyl-[ACP] + L-lysyl-[protein] = N(6)-(fatty acyl)-L-lysyl-[protein] + holo-[ACP] + H(+). Protein-lysine acyltransferase that catalyzes fatty acylation of the protoxin, thereby converting it to the active toxin. The polypeptide is RTX-III toxin-activating lysine-acyltransferase ApxIIC (apxIIIC) (Actinobacillus pleuropneumoniae (Haemophilus pleuropneumoniae)).